A 505-amino-acid polypeptide reads, in one-letter code: Alpha-1-syntrophin (505 aa).

Residues M1–L77 form a disordered region. 2 consecutive PH domains span residues R6 to N269 and D293 to H401. The PDZ domain maps to R87–K170. 5 positions are modified to phosphoserine: S101, S184, S189, S193, and S200. Positions A180–D211 are disordered. One can recognise an SU domain in the interval P449–A505. The interval P483–A505 is calmodulin-binding.

The protein belongs to the syntrophin family. Monomer and homodimer. Interacts with the dystrophin related protein DTNA; SGCG of the dystrophin glycoprotein complex; NOS1; GRB2; GA; TGFA; MAPK12 and the sodium channel proteins SCN4A and SCN5A. Interacts with the dystrophin protein DMD in a calmodulin dependent manner and with related protein UTRN; SGCA of the dystrophin glycoprotein complex; F-actin; calmodulin and with the other members of the syntrophin family SNTB1 and SNTB2. Interacts with MYOC; regulates muscle hypertrophy. Interacts with DTNB. Phosphorylated by CaM-kinase II. Phosphorylation may inhibit the interaction with DMD.

It localises to the cell membrane. The protein localises to the sarcolemma. Its subcellular location is the cell junction. It is found in the cytoplasm. The protein resides in the cytoskeleton. Its function is as follows. Adapter protein that binds to and probably organizes the subcellular localization of a variety of membrane proteins. May link various receptors to the actin cytoskeleton and the extracellular matrix via the dystrophin glycoprotein complex. Plays an important role in synapse formation and in the organization of UTRN and acetylcholine receptors at the neuromuscular synapse. Binds to phosphatidylinositol 4,5-bisphosphate. This chain is Alpha-1-syntrophin (SNTA1), found in Bos taurus (Bovine).